The following is a 448-amino-acid chain: Probable glycine dehydrogenase (decarboxylating) subunit 1 (448 aa).

It belongs to the GcvP family. N-terminal subunit subfamily. In terms of assembly, the glycine cleavage system is composed of four proteins: P, T, L and H. In this organism, the P 'protein' is a heterodimer of two subunits.

It carries out the reaction N(6)-[(R)-lipoyl]-L-lysyl-[glycine-cleavage complex H protein] + glycine + H(+) = N(6)-[(R)-S(8)-aminomethyldihydrolipoyl]-L-lysyl-[glycine-cleavage complex H protein] + CO2. Its function is as follows. The glycine cleavage system catalyzes the degradation of glycine. The P protein binds the alpha-amino group of glycine through its pyridoxal phosphate cofactor; CO(2) is released and the remaining methylamine moiety is then transferred to the lipoamide cofactor of the H protein. This Lysinibacillus sphaericus (strain C3-41) protein is Probable glycine dehydrogenase (decarboxylating) subunit 1.